The chain runs to 572 residues: Proline--tRNA ligase (572 aa).

This sequence belongs to the class-II aminoacyl-tRNA synthetase family. ProS type 1 subfamily. In terms of assembly, homodimer.

The protein resides in the cytoplasm. It carries out the reaction tRNA(Pro) + L-proline + ATP = L-prolyl-tRNA(Pro) + AMP + diphosphate. Its function is as follows. Catalyzes the attachment of proline to tRNA(Pro) in a two-step reaction: proline is first activated by ATP to form Pro-AMP and then transferred to the acceptor end of tRNA(Pro). As ProRS can inadvertently accommodate and process non-cognate amino acids such as alanine and cysteine, to avoid such errors it has two additional distinct editing activities against alanine. One activity is designated as 'pretransfer' editing and involves the tRNA(Pro)-independent hydrolysis of activated Ala-AMP. The other activity is designated 'posttransfer' editing and involves deacylation of mischarged Ala-tRNA(Pro). The misacylated Cys-tRNA(Pro) is not edited by ProRS. The chain is Proline--tRNA ligase from Escherichia coli O17:K52:H18 (strain UMN026 / ExPEC).